Here is a 35-residue protein sequence, read N- to C-terminus: U5-ctenitoxin-Co1a (35 aa).

Intrachain disulfides connect C4–C18, C11–C24, C17–C32, and C26–C30.

In terms of tissue distribution, expressed by the venom gland.

Its subcellular location is the secreted. Functionally, blocks voltage-gated sodium channels (Nav). The protein is U5-ctenitoxin-Co1a of Ctenus ornatus (Brazilian spider).